The chain runs to 430 residues: UDP-N-acetylglucosamine 1-carboxyvinyltransferase (430 aa).

Phosphoenolpyruvate is bound at residue 22 to 23 (KN). Arginine 102 provides a ligand contact to UDP-N-acetyl-alpha-D-glucosamine. Catalysis depends on cysteine 126, which acts as the Proton donor. Cysteine 126 bears the 2-(S-cysteinyl)pyruvic acid O-phosphothioketal mark. UDP-N-acetyl-alpha-D-glucosamine contacts are provided by residues 131–135 (RPVDL), 172–175 (KVSV), aspartate 317, and isoleucine 339.

It belongs to the EPSP synthase family. MurA subfamily.

It is found in the cytoplasm. The catalysed reaction is phosphoenolpyruvate + UDP-N-acetyl-alpha-D-glucosamine = UDP-N-acetyl-3-O-(1-carboxyvinyl)-alpha-D-glucosamine + phosphate. It participates in cell wall biogenesis; peptidoglycan biosynthesis. Cell wall formation. Adds enolpyruvyl to UDP-N-acetylglucosamine. The protein is UDP-N-acetylglucosamine 1-carboxyvinyltransferase of Agrobacterium fabrum (strain C58 / ATCC 33970) (Agrobacterium tumefaciens (strain C58)).